The following is a 150-amino-acid chain: Transcriptional repressor NrdR (150 aa).

A zinc finger spans residues 3–34 (CPFCAHPDSKVVDSRPDKGGAAIRRRRECESC). An ATP-cone domain is found at 49 to 139 (PLVLKKDGRR…VYRSFKDVNE (91 aa)).

This sequence belongs to the NrdR family. Zn(2+) serves as cofactor.

Its function is as follows. Negatively regulates transcription of bacterial ribonucleotide reductase nrd genes and operons by binding to NrdR-boxes. The sequence is that of Transcriptional repressor NrdR from Geobacter metallireducens (strain ATCC 53774 / DSM 7210 / GS-15).